The following is a 165-amino-acid chain: 3-isopropylmalate dehydratase small subunit (165 aa).

This sequence belongs to the LeuD family. LeuD type 2 subfamily. In terms of assembly, heterodimer of LeuC and LeuD.

It catalyses the reaction (2R,3S)-3-isopropylmalate = (2S)-2-isopropylmalate. The protein operates within amino-acid biosynthesis; L-leucine biosynthesis; L-leucine from 3-methyl-2-oxobutanoate: step 2/4. Its function is as follows. Catalyzes the isomerization between 2-isopropylmalate and 3-isopropylmalate, via the formation of 2-isopropylmaleate. The polypeptide is 3-isopropylmalate dehydratase small subunit (Halothermothrix orenii (strain H 168 / OCM 544 / DSM 9562)).